We begin with the raw amino-acid sequence, 449 residues long: MSKFSPPINRNMVELDRSFFHKEVPLLAAYFPNPKFLGQFVKSCQNDILYVQTVKHIISMDDSKAILLRDDVKSISDLNPETQLKINEFGIILKPYTLKLDYSFWKSEEILKSILPENLIDDVPSGFSQAGHLAHINLRDEYKPFGKLIGQVILDKNPSVLTVVDKVNTIANKFRTFPLELLAGEPNYIVEQSESGCKFKFDFSKVYWNSRLSTEHERIIGKFNSGDVVGDVFGGVGPFAIPASKKNVIVLANDLNPESYKYLQENIKINKVEPFIKPFNLDGREFIRKAPELLLQWHNSQNGIIEKKIIKKVSIDDNKTKKNFERKPIIETTKIPKFYHHFVMNLPDSALTFLDEFIGLYGSNPQLKTDPEFKLPIIHVHCFEKFENNENPTPEELHNRVYEKICKLIQFPLNKEKMEFHEVRMVSPTKPMFCVSFELPEEVAFKQSK.

Residues His216, 254-255 (DL), 282-283 (DG), and Asn345 contribute to the S-adenosyl-L-methionine site.

Belongs to the class I-like SAM-binding methyltransferase superfamily. TRM5/TYW2 family. As to quaternary structure, monomer.

It is found in the mitochondrion matrix. The protein localises to the nucleus. It localises to the cytoplasm. The enzyme catalyses guanosine(37) in tRNA + S-adenosyl-L-methionine = N(1)-methylguanosine(37) in tRNA + S-adenosyl-L-homocysteine + H(+). Its function is as follows. Specifically methylates the N1 position of guanosine-37 in various cytoplasmic and mitochondrial tRNAs. Methylation is not dependent on the nature of the nucleoside 5' of the target nucleoside. This is the first step in the biosynthesis of wybutosine (yW), a modified base adjacent to the anticodon of tRNAs and required for accurate decoding. The polypeptide is tRNA (guanine(37)-N(1))-methyltransferase (Candida albicans (strain SC5314 / ATCC MYA-2876) (Yeast)).